The chain runs to 107 residues: Transmembrane protein 213 (107 aa).

The signal sequence occupies residues 1–27 (MQRLPAATRATLILSLAFASLHSACSA). The Extracellular segment spans residues 28–70 (EASSSNSSSLTAHHPDPGTLEQCLNVDFCPQAARCCRTGVDEY). Residues 71 to 91 (GWIAAAVGWSLWFLTLILLCV) traverse the membrane as a helical segment. The Cytoplasmic segment spans residues 92–107 (DKLMKLTPDEPKDLQA).

The protein localises to the membrane. The chain is Transmembrane protein 213 (TMEM213) from Homo sapiens (Human).